Here is a 298-residue protein sequence, read N- to C-terminus: N-acetylmuramic acid 6-phosphate etherase (298 aa).

The SIS domain maps to 55–218; the sequence is IHAQVSGGGR…STGLMIKSGK (164 aa). The active-site Proton donor is Glu83. Glu114 is a catalytic residue.

Belongs to the GCKR-like family. MurNAc-6-P etherase subfamily. In terms of assembly, homodimer.

It catalyses the reaction N-acetyl-D-muramate 6-phosphate + H2O = N-acetyl-D-glucosamine 6-phosphate + (R)-lactate. Its pathway is amino-sugar metabolism; 1,6-anhydro-N-acetylmuramate degradation. It participates in amino-sugar metabolism; N-acetylmuramate degradation. The protein operates within cell wall biogenesis; peptidoglycan recycling. Specifically catalyzes the cleavage of the D-lactyl ether substituent of MurNAc 6-phosphate, producing GlcNAc 6-phosphate and D-lactate. Together with AnmK, is also required for the utilization of anhydro-N-acetylmuramic acid (anhMurNAc) either imported from the medium or derived from its own cell wall murein, and thus plays a role in cell wall recycling. The sequence is that of N-acetylmuramic acid 6-phosphate etherase from Escherichia coli O81 (strain ED1a).